Reading from the N-terminus, the 555-residue chain is 3-oxocholest-4-en-26-oate--CoA ligase (555 aa).

ATP-binding positions include 172–180 (TGGTTGHPK), D418, R433, and K524. The disordered stretch occupies residues 525–555 (PDYRWAKDQTGLRPADEVYNNGDGNGAAATG). Positions 544–555 (NNGDGNGAAATG) are enriched in low complexity.

The protein belongs to the ATP-dependent AMP-binding enzyme family.

The catalysed reaction is (25S)-3-oxocholest-4-en-26-oate + ATP + CoA = (25S)-3-oxocholest-4-en-26-oyl-CoA + AMP + diphosphate. It participates in steroid metabolism; cholesterol metabolism. Its function is as follows. Involved in the degradation of the side chains of C-24 branched-chain sterols. Catalyzes the ATP-dependent CoA thioesterification of the sterol 3-oxocholest-4-en-26-oate to yield 3-oxocholest-4-en-26-oyl-CoA. It can also use beta-sitosterol, campesterol and 3beta-hydroxy-5-cholesten-26-oate. The chain is 3-oxocholest-4-en-26-oate--CoA ligase from Rhodococcus rhodochrous.